The chain runs to 159 residues: Dihydrofolate reductase (159 aa).

Residues 1 to 158 form the DHFR domain; it reads MISLIAALAV…HSYCFEILER (158 aa). Ile5 serves as a coordination point for substrate. NADP(+) is bound by residues Ala7 and 13–19; that span reads VIGMENA. Position 27 (Asp27) interacts with substrate. 45–46 is a binding site for NADP(+); the sequence is HT. Substrate-binding residues include Arg52 and Arg57. Residues 63–64, Lys76, and 95–102 contribute to the NADP(+) site; these read SS and GGGRVYEQ. Thr113 lines the substrate pocket.

Belongs to the dihydrofolate reductase family.

It carries out the reaction (6S)-5,6,7,8-tetrahydrofolate + NADP(+) = 7,8-dihydrofolate + NADPH + H(+). It participates in cofactor biosynthesis; tetrahydrofolate biosynthesis; 5,6,7,8-tetrahydrofolate from 7,8-dihydrofolate: step 1/1. In terms of biological role, key enzyme in folate metabolism. Catalyzes an essential reaction for de novo glycine and purine synthesis, and for DNA precursor synthesis. In Escherichia coli O6:H1 (strain CFT073 / ATCC 700928 / UPEC), this protein is Dihydrofolate reductase (folA).